We begin with the raw amino-acid sequence, 142 residues long: FAD synthase (142 aa).

ATP is bound by residues 9 to 10 (TF), 14 to 17 (HPGH), and Asp92.

The protein belongs to the archaeal FAD synthase family. In terms of assembly, homodimer. Requires a divalent metal cation as cofactor.

The enzyme catalyses FMN + ATP + H(+) = FAD + diphosphate. The protein operates within cofactor biosynthesis; FAD biosynthesis; FAD from FMN: step 1/1. Functionally, catalyzes the transfer of the AMP portion of ATP to flavin mononucleotide (FMN) to produce flavin adenine dinucleotide (FAD) coenzyme. The protein is FAD synthase of Halalkalicoccus jeotgali (strain DSM 18796 / CECT 7217 / JCM 14584 / KCTC 4019 / B3).